The sequence spans 326 residues: Pyruvate dehydrogenase E1 component subunit alpha (326 aa).

Heterodimer of an alpha and a beta chain. Thiamine diphosphate is required as a cofactor.

The enzyme catalyses N(6)-[(R)-lipoyl]-L-lysyl-[protein] + pyruvate + H(+) = N(6)-[(R)-S(8)-acetyldihydrolipoyl]-L-lysyl-[protein] + CO2. Its function is as follows. The pyruvate dehydrogenase complex catalyzes the overall conversion of pyruvate to acetyl-CoA and CO(2). It contains multiple copies of three enzymatic components: pyruvate dehydrogenase (E1), dihydrolipoamide acetyltransferase (E2) and lipoamide dehydrogenase (E3). This is Pyruvate dehydrogenase E1 component subunit alpha (pdhA) from Rickettsia conorii (strain ATCC VR-613 / Malish 7).